Consider the following 179-residue polypeptide: Large ribosomal subunit protein uL5 (179 aa).

The protein belongs to the universal ribosomal protein uL5 family. In terms of assembly, part of the 50S ribosomal subunit; part of the 5S rRNA/L5/L18/L25 subcomplex. Contacts the 5S rRNA and the P site tRNA. Forms a bridge to the 30S subunit in the 70S ribosome.

In terms of biological role, this is one of the proteins that bind and probably mediate the attachment of the 5S RNA into the large ribosomal subunit, where it forms part of the central protuberance. In the 70S ribosome it contacts protein S13 of the 30S subunit (bridge B1b), connecting the 2 subunits; this bridge is implicated in subunit movement. Contacts the P site tRNA; the 5S rRNA and some of its associated proteins might help stabilize positioning of ribosome-bound tRNAs. The polypeptide is Large ribosomal subunit protein uL5 (Bacillus licheniformis (strain ATCC 14580 / DSM 13 / JCM 2505 / CCUG 7422 / NBRC 12200 / NCIMB 9375 / NCTC 10341 / NRRL NRS-1264 / Gibson 46)).